A 353-amino-acid polypeptide reads, in one-letter code: C-X-C chemokine receptor type 4 (353 aa).

The tract at residues 1-22 (MEGIRIFTSDNYTEDDLGSGDY) is important for chemokine binding and signaling. Residues 1–39 (MEGIRIFTSDNYTEDDLGSGDYDSMKEPCFREENAHFNR) lie on the Extracellular side of the membrane. The N-linked (GlcNAc...) asparagine glycan is linked to Asn11. Position 12 is a sulfotyrosine (Tyr12). Residue Ser19 is glycosylated (O-linked (Xyl...) (chondroitin sulfate) serine). Tyr22 is modified (sulfotyrosine). Disulfide bonds link Cys29-Cys275 and Cys110-Cys187. A helical membrane pass occupies residues 40–64 (IFLPTVYSIIFLTGIVGNGLVILVM). Residues 65 to 78 (GYQKKLRSMTDKYR) lie on the Cytoplasmic side of the membrane. A helical membrane pass occupies residues 79-100 (LHLSVADLLFVLTLPFWAVDAV). Residues 95 to 98 (WAVD) form a chemokine binding region. Over 101–111 (ANWYFGKFLCK) the chain is Extracellular. A helical transmembrane segment spans residues 112-131 (AVHVIYTVNLYSSVLILAFI). A chemokine binding region spans residues 114–118 (HVIYT). Over 132–155 (SLDRYLAIVHATNSQKPRKLLAEK) the chain is Cytoplasmic. The Important for signaling signature appears at 134-136 (DRY). The tract at residues 136–148 (YLAIVHATNSQKP) is involved in dimerization; when bound to chemokine. Residues 156–175 (VVYVGVWLPAVLLTIPDLIF) form a helical membrane-spanning segment. The Extracellular portion of the chain corresponds to 176–196 (ADIKEVDERYICDRFYPSDLW). The tract at residues 187-191 (CDRFY) is chemokine binding, important for signaling. An involved in dimerization region spans residues 192 to 211 (PSDLWLVVFQFQHIVVGLLL). A helical membrane pass occupies residues 197–217 (LVVFQFQHIVVGLLLPGIVIL). Over 218–242 (SCYCIIISKLSHSKGYQKRKALKTT) the chain is Cytoplasmic. Residues 243–262 (VILILTFFACWLPYYIGISI) form a helical membrane-spanning segment. The Extracellular segment spans residues 263–283 (DSFILLEIIQQGCEFESTVHK). Residues 267–269 (LLE) are involved in dimerization. The helical transmembrane segment at 284–303 (WISITEALAFFHCCLNPILY) threads the bilayer. At 304-353 (AFLGAKFKTSAQHALTSVSRGSSLKILSKGKRGGHSSVSTESESSSFHSS) the chain is on the cytoplasmic side. Ser320 and Ser322 each carry phosphoserine. Residues Ser325 and Ser326 each carry the phosphoserine; by PKC and GRK6 modification. Positions 330 to 353 (LSKGKRGGHSSVSTESESSSFHSS) are disordered. At Ser331 the chain carries Phosphoserine; by GRK6. A Glycyl lysine isopeptide (Lys-Gly) (interchain with G-Cter in ubiquitin) cross-link involves residue Lys332. The span at 338–353 (HSSVSTESESSSFHSS) shows a compositional bias: low complexity. At Ser340 the chain carries Phosphoserine; by GRK6. A phosphoserine mark is found at Ser349 and Ser352.

This sequence belongs to the G-protein coupled receptor 1 family. In terms of assembly, monomer. Can form homodimers. Interacts with CD164. Interacts with ARRB2; the interaction is dependent on the C-terminal phosphorylation of CXCR4 and allows activation of MAPK1 and MAPK3. Interacts with ARR3; the interaction is dependent on the C-terminal phosphorylation of CXCR4 and modulates calcium mobilization. Interacts with RNF113A; the interaction, enhanced by CXCL12, promotes CXCR4 ubiquitination and subsequent degradation. Interacts (via the cytoplasmic C-terminal) with ITCH (via the WW domains I and II); the interaction, enhanced by CXCL12, promotes CXCR4 ubiquitination and leads to its degradation. Interacts with extracellular ubiquitin. Interacts with DBN1; this interaction is enhanced by antigenic stimulation. Following LPS binding, may form a complex with GDF5, HSP90AA1 and HSPA8. Phosphorylated on agonist stimulation. Rapidly phosphorylated on serine and threonine residues in the C-terminal. Phosphorylation at Ser-325 and Ser-326 leads to recruitment of ITCH, ubiquitination and protein degradation. In terms of processing, ubiquitinated after ligand binding, leading to its degradation. Ubiquitinated by ITCH at the cell membrane on agonist stimulation. The ubiquitin-dependent mechanism, endosomal sorting complex required for transport (ESCRT), then targets CXCR4 for lysosomal degradation. This process is dependent also on prior Ser-/Thr-phosphorylation in the C-terminal of CXCR4. Also binding of ARRB1 to STAM negatively regulates CXCR4 sorting to lysosomes though modulating ubiquitination of SFR5S. Post-translationally, sulfation is required for efficient binding of CXCL12/SDF-1alpha and promotes its dimerization. O- and N-glycosylated. N-glycosylation can mask coreceptor function. The O-glycosylation chondroitin sulfate attachment does not affect interaction with CXCL12/SDF-1alpha nor its coreceptor activity. As to expression, brain, heart, kidney, lung and liver.

Its subcellular location is the cell membrane. The protein localises to the cell junction. The protein resides in the early endosome. It localises to the late endosome. It is found in the lysosome. Receptor for the C-X-C chemokine CXCL12/SDF-1 that transduces a signal by increasing intracellular calcium ion levels and enhancing MAPK1/MAPK3 activation. Involved in the AKT signaling cascade. Plays a role in regulation of cell migration, e.g. during wound healing. Acts as a receptor for extracellular ubiquitin; leading to enhanced intracellular calcium ions and reduced cellular cAMP levels. Binds bacterial lipopolysaccharide (LPS) et mediates LPS-induced inflammatory response, including TNF secretion by monocytes. Involved in hematopoiesis and in cardiac ventricular septum formation. Also plays an essential role in vascularization of the gastrointestinal tract, probably by regulating vascular branching and/or remodeling processes in endothelial cells. Involved in cerebellar development. In the CNS, could mediate hippocampal-neuron survival. The protein is C-X-C chemokine receptor type 4 (CXCR4) of Bos taurus (Bovine).